Here is a 310-residue protein sequence, read N- to C-terminus: Protein N-terminal asparagine amidohydrolase (310 aa).

In terms of assembly, monomer.

It is found in the cytoplasm. The catalysed reaction is N-terminal L-asparaginyl-[protein] + H2O + H(+) = N-terminal L-aspartyl-[protein] + NH4(+). With respect to regulation, inhibited by micromolar concentrations of copper and zinc ions. In terms of biological role, N-terminal asparagine deamidase that mediates deamidation of N-terminal asparagine residues to aspartate. Required for the ubiquitin-dependent turnover of intracellular proteins that initiate with Met-Asn. These proteins are acetylated on the retained initiator methionine and can subsequently be modified by the removal of N-acetyl methionine by acylaminoacid hydrolase (AAH). Conversion of the resulting N-terminal asparagine to aspartate by NTAN1/PNAD renders the protein susceptible to arginylation, polyubiquitination and degradation as specified by the N-end rule. This enzyme does not act on substrates with internal or C-terminal asparagines and does not act on glutamine residues in any position, nor on acetylated N-terminal peptidyl Asn. The polypeptide is Protein N-terminal asparagine amidohydrolase (NTAN1) (Homo sapiens (Human)).